Reading from the N-terminus, the 600-residue chain is Glutamine--fructose-6-phosphate aminotransferase [isomerizing] (600 aa).

The active-site Nucleophile; for GATase activity is the Cys2. Positions 2–217 (CGIVGYIGQN…DKEIVLVSRN (216 aa)) constitute a Glutamine amidotransferase type-2 domain. SIS domains follow at residues 283–422 (IRTA…VKGL) and 452–590 (LARD…VDKP). Catalysis depends on Lys595, which acts as the For Fru-6P isomerization activity.

In terms of assembly, homodimer.

The protein localises to the cytoplasm. It catalyses the reaction D-fructose 6-phosphate + L-glutamine = D-glucosamine 6-phosphate + L-glutamate. In terms of biological role, catalyzes the first step in hexosamine metabolism, converting fructose-6P into glucosamine-6P using glutamine as a nitrogen source. This Oceanobacillus iheyensis (strain DSM 14371 / CIP 107618 / JCM 11309 / KCTC 3954 / HTE831) protein is Glutamine--fructose-6-phosphate aminotransferase [isomerizing].